We begin with the raw amino-acid sequence, 393 residues long: Probable acetyl-CoA acyltransferase (393 aa).

The Acyl-thioester intermediate role is filled by cysteine 88. Active-site proton acceptor residues include histidine 349 and cysteine 378.

This sequence belongs to the thiolase-like superfamily. Thiolase family.

The protein localises to the cytoplasm. It carries out the reaction 2 acetyl-CoA = acetoacetyl-CoA + CoA. The chain is Probable acetyl-CoA acyltransferase from Staphylococcus aureus (strain MRSA252).